The chain runs to 101 residues: Salivary thrombin inhibitor anophelin (101 aa).

Positions 1-21 (MASKVIVIALLCIALAAFVQG) are cleaved as a signal peptide. The disordered stretch occupies residues 26-101 (THGEEPEYDE…SDSSSGSTEN (76 aa)). Positions 31 to 40 (PEYDEDDGAD) are enriched in acidic residues. Residues 75-78 (DPGR) are blocks active site cleft of host thrombin in a reverse direction compared to substrates. The span at 75-87 (DPGRRPEFLKQHN) shows a compositional bias: basic and acidic residues. Residues 88 to 101 (NENQSDSSSGSTEN) show a composition bias toward polar residues. Asparagine 90 carries an N-linked (GlcNAc...) asparagine glycan.

It belongs to the anophelin family. Interacts with human F2 (thrombin); the interaction results in thrombin inhibition.

Its subcellular location is the secreted. Salivary protein with anticoagulant activity that inhibits host thrombin (F2). The protein is Salivary thrombin inhibitor anophelin of Anopheles stephensi (Indo-Pakistan malaria mosquito).